Consider the following 525-residue polypeptide: Adenosine deaminase AGSA (525 aa).

The first 25 residues, 1–25 (MSSFSTHNFVAIATFVCWFCCLATA), serve as a signal peptide directing secretion. Residue Asn81 is glycosylated (N-linked (GlcNAc...) asparagine). Residues His117 and His119 each coordinate Zn(2+). Asp120 provides a ligand contact to substrate. A glycan (N-linked (GlcNAc...) asparagine) is linked at Asn132. Cys142 and Cys163 are oxidised to a cystine. A glycan (N-linked (GlcNAc...) asparagine) is linked at Asn188. Residues 207 to 214 (WVRFNKYF) and Gly329 contribute to the substrate site. A glycan (N-linked (GlcNAc...) asparagine) is linked at Asn334. His361 provides a ligand contact to Zn(2+). Glu364 serves as the catalytic Proton donor. The Proton acceptor role is filled by His389. Asp446 lines the Zn(2+) pocket. Asp447 serves as a coordination point for substrate.

Belongs to the metallo-dependent hydrolases superfamily. Adenosine and AMP deaminases family. ADGF subfamily. Zn(2+) is required as a cofactor. Detected in egg cordons and in the developing central nervous system. Not detected in adult central nervous system (at protein level). Atrial gland.

The protein resides in the secreted. The enzyme catalyses adenosine + H2O + H(+) = inosine + NH4(+). In terms of biological role, adenosine deaminase that may contribute to the degradation of extracellular adenosine, a signaling molecule that controls a variety of cellular responses. May play a role in the regulation of cell proliferation. This Aplysia californica (California sea hare) protein is Adenosine deaminase AGSA.